Reading from the N-terminus, the 319-residue chain is 4-hydroxy-3-methylbut-2-enyl diphosphate reductase (319 aa).

Residue Cys17 participates in [4Fe-4S] cluster binding. (2E)-4-hydroxy-3-methylbut-2-enyl diphosphate contacts are provided by His46 and His79. The dimethylallyl diphosphate site is built by His46 and His79. The isopentenyl diphosphate site is built by His46 and His79. Cys101 serves as a coordination point for [4Fe-4S] cluster. His129 contacts (2E)-4-hydroxy-3-methylbut-2-enyl diphosphate. Residue His129 coordinates dimethylallyl diphosphate. Isopentenyl diphosphate is bound at residue His129. Catalysis depends on Glu131, which acts as the Proton donor. Thr170 is a (2E)-4-hydroxy-3-methylbut-2-enyl diphosphate binding site. Cys200 is a binding site for [4Fe-4S] cluster. The (2E)-4-hydroxy-3-methylbut-2-enyl diphosphate site is built by Ser228, Ser229, Asn230, and Ser273. Positions 228, 229, 230, and 273 each coordinate dimethylallyl diphosphate. 4 residues coordinate isopentenyl diphosphate: Ser228, Ser229, Asn230, and Ser273.

Belongs to the IspH family. [4Fe-4S] cluster is required as a cofactor.

The enzyme catalyses isopentenyl diphosphate + 2 oxidized [2Fe-2S]-[ferredoxin] + H2O = (2E)-4-hydroxy-3-methylbut-2-enyl diphosphate + 2 reduced [2Fe-2S]-[ferredoxin] + 2 H(+). It carries out the reaction dimethylallyl diphosphate + 2 oxidized [2Fe-2S]-[ferredoxin] + H2O = (2E)-4-hydroxy-3-methylbut-2-enyl diphosphate + 2 reduced [2Fe-2S]-[ferredoxin] + 2 H(+). It functions in the pathway isoprenoid biosynthesis; dimethylallyl diphosphate biosynthesis; dimethylallyl diphosphate from (2E)-4-hydroxy-3-methylbutenyl diphosphate: step 1/1. It participates in isoprenoid biosynthesis; isopentenyl diphosphate biosynthesis via DXP pathway; isopentenyl diphosphate from 1-deoxy-D-xylulose 5-phosphate: step 6/6. In terms of biological role, catalyzes the conversion of 1-hydroxy-2-methyl-2-(E)-butenyl 4-diphosphate (HMBPP) into a mixture of isopentenyl diphosphate (IPP) and dimethylallyl diphosphate (DMAPP). Acts in the terminal step of the DOXP/MEP pathway for isoprenoid precursor biosynthesis. This is 4-hydroxy-3-methylbut-2-enyl diphosphate reductase from Cereibacter sphaeroides (strain ATCC 17023 / DSM 158 / JCM 6121 / CCUG 31486 / LMG 2827 / NBRC 12203 / NCIMB 8253 / ATH 2.4.1.) (Rhodobacter sphaeroides).